Consider the following 221-residue polypeptide: Thyrotroph embryonic factor (221 aa).

Residues 72–116 (ESASSSTASPPSSSTAVFQPSETVSSTESSLEKERETPSPIDPNC) are disordered. Low complexity predominate over residues 73–100 (SASSSTASPPSSSTAVFQPSETVSSTES). A bZIP domain is found at 173-221 (DEKYWTRRKKNNVAAKRSRDARRLKENQITIRAAFLEKENTALRTEVAD). The segment at 175-195 (KYWTRRKKNNVAAKRSRDARR) is basic motif. The leucine-zipper stretch occupies residues 196 to 203 (LKENQITI).

This sequence belongs to the bZIP family. PAR subfamily. In terms of assembly, binds DNA as a homodimer or a heterodimer. Can form a heterodimer with DBP.

It localises to the nucleus. Its function is as follows. Transcription factor that binds to and transactivates the TSHB promoter. Binds to a minimal DNA-binding sequence 5'-[TC][AG][AG]TTA[TC][AG]-3'. This is Thyrotroph embryonic factor (TEF) from Phodopus sungorus (Striped hairy-footed hamster).